Consider the following 298-residue polypeptide: UDP-N-acetylenolpyruvoylglucosamine reductase (298 aa).

An FAD-binding PCMH-type domain is found at 27-191 (TGGNADVFVM…LDATFSLELE (165 aa)). Arg-170 is an active-site residue. The Proton donor role is filled by Ser-220. The active site involves Glu-290.

It belongs to the MurB family. Requires FAD as cofactor.

Its subcellular location is the cytoplasm. The catalysed reaction is UDP-N-acetyl-alpha-D-muramate + NADP(+) = UDP-N-acetyl-3-O-(1-carboxyvinyl)-alpha-D-glucosamine + NADPH + H(+). It functions in the pathway cell wall biogenesis; peptidoglycan biosynthesis. Its function is as follows. Cell wall formation. In Listeria innocua serovar 6a (strain ATCC BAA-680 / CLIP 11262), this protein is UDP-N-acetylenolpyruvoylglucosamine reductase.